The following is a 216-amino-acid chain: Cytochrome c biogenesis ATP-binding export protein CcmA (216 aa).

Residues 11–216 (VSASKLTCIR…RKIRLDYRFV (206 aa)) form the ABC transporter domain. ATP is bound at residue 43–50 (GPNGAGKT).

This sequence belongs to the ABC transporter superfamily. CcmA exporter (TC 3.A.1.107) family. The complex is composed of two ATP-binding proteins (CcmA) and two transmembrane proteins (CcmB).

The protein localises to the cell inner membrane. The enzyme catalyses heme b(in) + ATP + H2O = heme b(out) + ADP + phosphate + H(+). Its function is as follows. Part of the ABC transporter complex CcmAB involved in the biogenesis of c-type cytochromes; once thought to export heme, this seems not to be the case, but its exact role is uncertain. Responsible for energy coupling to the transport system. The chain is Cytochrome c biogenesis ATP-binding export protein CcmA from Shewanella sp. (strain MR-4).